Reading from the N-terminus, the 166-residue chain is Protein UL5 (166 aa).

This sequence belongs to the RL11 family. Interacts with host IQGAP1.

Its subcellular location is the host cytoplasm. Functionally, may play a role in rearrangement of cellular cytoskeleton towards an efficient viral assembly and spreading. The protein is Protein UL5 (UL5) of Human cytomegalovirus (strain AD169) (HHV-5).